Consider the following 869-residue polypeptide: Bifunctional uridylyltransferase/uridylyl-removing enzyme (869 aa).

The interval Met-1–Pro-332 is uridylyltransferase. Residues Leu-333–Leu-691 are uridylyl-removing. An HD domain is found at Val-450–Leu-572. 2 consecutive ACT domains span residues Glu-692–Pro-774 and Arg-798–Val-869.

The protein belongs to the GlnD family. The cofactor is Mg(2+).

The enzyme catalyses [protein-PII]-L-tyrosine + UTP = [protein-PII]-uridylyl-L-tyrosine + diphosphate. It carries out the reaction [protein-PII]-uridylyl-L-tyrosine + H2O = [protein-PII]-L-tyrosine + UMP + H(+). Its activity is regulated as follows. Uridylyltransferase (UTase) activity is inhibited by glutamine, while glutamine activates uridylyl-removing (UR) activity. Its function is as follows. Modifies, by uridylylation and deuridylylation, the PII regulatory proteins (GlnB and homologs), in response to the nitrogen status of the cell that GlnD senses through the glutamine level. Under low glutamine levels, catalyzes the conversion of the PII proteins and UTP to PII-UMP and PPi, while under higher glutamine levels, GlnD hydrolyzes PII-UMP to PII and UMP (deuridylylation). Thus, controls uridylylation state and activity of the PII proteins, and plays an important role in the regulation of nitrogen assimilation and metabolism. This is Bifunctional uridylyltransferase/uridylyl-removing enzyme from Xanthomonas euvesicatoria pv. vesicatoria (strain 85-10) (Xanthomonas campestris pv. vesicatoria).